We begin with the raw amino-acid sequence, 1579 residues long: MAP kinase kinase kinase SSK2 (1579 aa).

The tract at residues 1–70 (MSHSDYFNYK…HSTQYFRSPN (70 aa)) is disordered. Over residues 21–44 (SSKMRQSSSSSSSRLRSESLGRNS) the composition is skewed to low complexity. Positions 45 to 67 (NTTQARVASSPISPGLHSTQYFR) are enriched in polar residues. A phosphoserine mark is found at Ser57, Ser62, Ser78, and Ser118. 2 disordered regions span residues 97 to 155 (FFHQ…ESEI) and 190 to 243 (SIMS…GSTT). Low complexity predominate over residues 104-118 (SGSSSSSARSSRRPS). Positions 127 to 139 (NPQQSLPKLSTQP) are enriched in polar residues. Over residues 144-155 (KKVEASKTESEI) the composition is skewed to basic and acidic residues. Position 290 is a phosphoserine (Ser290). The Protein kinase domain occupies 1266 to 1558 (WQKRNFIGGG…AVELLMDPWI (293 aa)). Residues 1272–1280 (IGGGTFGRV) and Lys1295 each bind ATP. The active-site Proton acceptor is the Asp1390. Ser1424 bears the Phosphoserine mark.

Belongs to the protein kinase superfamily. STE Ser/Thr protein kinase family. MAP kinase kinase kinase subfamily. In terms of assembly, interacts with by SSK1.

The enzyme catalyses L-seryl-[protein] + ATP = O-phospho-L-seryl-[protein] + ADP + H(+). The catalysed reaction is L-threonyl-[protein] + ATP = O-phospho-L-threonyl-[protein] + ADP + H(+). In terms of biological role, kinase involved in a signal transduction pathway that is activated by changes in the osmolarity of the extracellular environment. Activates the PBS2 MAP kinase kinase by phosphorylation. The polypeptide is MAP kinase kinase kinase SSK2 (SSK2) (Saccharomyces cerevisiae (strain ATCC 204508 / S288c) (Baker's yeast)).